A 2559-amino-acid chain; its full sequence is Ubiquitin carboxyl-terminal hydrolase 9X (2559 aa).

Polar residues predominate over residues 1–44 (MTATTRGSPVGGNDNQGQAPDGQSQPPLQQNQTSSPDSSNENSP). A disordered region spans residues 1–64 (MTATTRGSPV…DAPPQIEDEE (64 aa)). Phosphoserine occurs at positions 374, 375, and 588. The disordered stretch occupies residues 967–999 (QISSNMPSSPDSSSDSSTGSPGNHGNHYSDGPN). Low complexity predominate over residues 969–989 (SSNMPSSPDSSSDSSTGSPGN). Positions 1557-1956 (VGLKNAGATC…NAYILFYERM (400 aa)) constitute a USP domain. C1566 serves as the catalytic Nucleophile. Positions 1592–1633 (GSDVDDDMSGDEKQDNESNVDPRDDVFGYPQQFEDKPPLSKT) are disordered. S1600 is subject to Phosphoserine. Basic and acidic residues-rich tracts occupy residues 1601-1617 (GDEKQDNESNVDPRDDV) and 1624-1633 (FEDKPPLSKT). C1727, H1729, C1771, and C1774 together coordinate Zn(2+). H1879 functions as the Proton acceptor in the catalytic mechanism. Residue S2443 is modified to Phosphoserine. Positions 2475–2484 (PEEEPDDQDA) are enriched in acidic residues. The disordered stretch occupies residues 2475–2559 (PEEEPDDQDA…QTKGSVKCTY (85 aa)). Polar residues-rich tracts occupy residues 2503–2513 (PGSQYQQNNHV) and 2527–2537 (NNPQRTGQRAQ). Y2540 carries the phosphotyrosine modification. Phosphoserine is present on S2547. The residue at position 2551 (T2551) is a Phosphothreonine.

The protein belongs to the peptidase C19 family. As to quaternary structure, interacts with SMAD4, MARK4, NUAK1 and BIRC5/survivin. Interacts with DCX. Interacts with OTUD4 and USP7; the interaction is direct. Highest levels in liver and brain with expression also detected in heart, muscle, spleen and kidney (at protein leve). Ubiquitously expressed in adult tissues.

Its subcellular location is the cytoplasm. It is found in the cytosol. The protein resides in the cell projection. The protein localises to the growth cone. It localises to the cytoskeleton. Its subcellular location is the cilium axoneme. The catalysed reaction is Thiol-dependent hydrolysis of ester, thioester, amide, peptide and isopeptide bonds formed by the C-terminal Gly of ubiquitin (a 76-residue protein attached to proteins as an intracellular targeting signal).. Its function is as follows. Deubiquitinase involved both in the processing of ubiquitin precursors and of ubiquitinated proteins. May therefore play an important regulatory role at the level of protein turnover by preventing degradation of proteins through the removal of conjugated ubiquitin. Specifically hydrolyzes 'Lys-11'-, followed by 'Lys-63'-, 'Lys-48'- and 'Lys-6'-linked polyubiquitins chains. Essential component of TGF-beta/BMP signaling cascade. Specifically deubiquitinates monoubiquitinated SMAD4, opposing the activity of E3 ubiquitin-protein ligase TRIM33. Deubiquitinates alkylation repair enzyme ALKBH3. OTUD4 recruits USP7 and USP9X to stabilize ALKBH3, thereby promoting the repair of alkylated DNA lesions. Deubiquitinates RNA demethylase enzyme ALKBH5, promoting its stability. Deubiquitinates mTORC2 complex component RICTOR at 'Lys-294' by removing 'Lys-63'-linked polyubiquitin chains, stabilizing RICTOR and enhancing its binding to MTOR, thus promoting mTORC2 complex assembly. Regulates chromosome alignment and segregation in mitosis by regulating the localization of BIRC5/survivin to mitotic centromeres. Involved in axonal growth and neuronal cell migration. Regulates cellular clock function by enhancing the protein stability and transcriptional activity of the core circadian protein BMAL1 via its deubiquitinating activity. Acts as a regulator of peroxisome import by mediating deubiquitination of PEX5: specifically deubiquitinates PEX5 monoubiquitinated at 'Cys-11' following its retrotranslocation into the cytosol, resetting PEX5 for a subsequent import cycle. Deubiquitinates PEG10. Inhibits the activation of the Hippo signaling pathway via deubiquitination of AMOTL2 at 'Lys-337' and 'Lys-404' which prohibits its interaction with and activation of LATS2. Loss of LATS2 activation and subsequent loss of YAP1 phosphorylation results in an increase in YAP1-driven transcription of target genes. The sequence is that of Ubiquitin carboxyl-terminal hydrolase 9X from Mus musculus (Mouse).